Reading from the N-terminus, the 197-residue chain is Mediator of RNA polymerase II transcription subunit 21 (197 aa).

A disordered region spans residues 37 to 112; sequence PPPSVPSAVP…APPRPDSPNT (76 aa). Composition is skewed to low complexity over residues 60 to 70 and 90 to 100; these read PTSGTATNTPG and PQMQQQHQEQP. A coiled-coil region spans residues 140-183; the sequence is GIKSSEAEQQERIKQLAEELRVVEEERSARRRELRRLGEKVDGL.

It belongs to the Mediator complex subunit 21 family. Component of the Mediator complex.

Its subcellular location is the nucleus. Functionally, component of the Mediator complex, a coactivator involved in the regulated transcription of nearly all RNA polymerase II-dependent genes. Mediator functions as a bridge to convey information from gene-specific regulatory proteins to the basal RNA polymerase II transcription machinery. Mediator is recruited to promoters by direct interactions with regulatory proteins and serves as a scaffold for the assembly of a functional preinitiation complex with RNA polymerase II and the general transcription factors. In Coccidioides immitis (strain RS) (Valley fever fungus), this protein is Mediator of RNA polymerase II transcription subunit 21 (SRB7).